Reading from the N-terminus, the 262-residue chain is Adenosylcobinamide-GDP ribazoletransferase (262 aa).

A run of 6 helical transmembrane segments spans residues 11–31 (LNLF…SWVI), 43–63 (YFGL…WFTQ), 66–86 (LPTS…TGGF), 121–141 (AIVL…LALF), 146–166 (AITG…SLIF), and 199–219 (IFVL…SLWA).

Belongs to the CobS family. It depends on Mg(2+) as a cofactor.

The protein localises to the cell inner membrane. The catalysed reaction is alpha-ribazole + adenosylcob(III)inamide-GDP = adenosylcob(III)alamin + GMP + H(+). It catalyses the reaction alpha-ribazole 5'-phosphate + adenosylcob(III)inamide-GDP = adenosylcob(III)alamin 5'-phosphate + GMP + H(+). It functions in the pathway cofactor biosynthesis; adenosylcobalamin biosynthesis; adenosylcobalamin from cob(II)yrinate a,c-diamide: step 7/7. Joins adenosylcobinamide-GDP and alpha-ribazole to generate adenosylcobalamin (Ado-cobalamin). Also synthesizes adenosylcobalamin 5'-phosphate from adenosylcobinamide-GDP and alpha-ribazole 5'-phosphate. The polypeptide is Adenosylcobinamide-GDP ribazoletransferase (Shewanella denitrificans (strain OS217 / ATCC BAA-1090 / DSM 15013)).